A 444-amino-acid chain; its full sequence is Ribosome biogenesis protein YTM1 (444 aa).

Positions 8 to 89 are ubiquitin-like (UBL) domain; it reads VKLRFFTREE…ETFLNVEYTR (82 aa). WD repeat units lie at residues 99–138, 140–178, 194–231, 269–309, 311–350, 357–397, and 408–444; these read SFDN…EKQY, GHSG…LKSI, GHKA…MTVI, SHSA…CVDT, TTSY…SSKI, GHKN…AMYT, and GVND…IFSN. Residues 99–444 are sufficient for interaction with ERB1 and association with 66S pre-ribosomes; the sequence is SFDNEDWVSS…INKGDNIFSN (346 aa).

It belongs to the WD repeat WDR12/YTM1 family. As to quaternary structure, component of the NOP7 complex, composed of ERB1, NOP7 and YTM1. The complex is held together by ERB1, which interacts with NOP7 via its N-terminal domain and with YTM1 via a high-affinity interaction between the seven-bladed beta-propeller domains of the 2 proteins. The NOP7 complex associates with the 66S pre-ribosome. Interacts (via UBL domain) with MDN1 (via VWFA/MIDAS domain).

The protein resides in the nucleus. Its subcellular location is the nucleolus. It localises to the nucleoplasm. Functionally, component of the NOP7 complex, which is required for maturation of the 25S and 5.8S ribosomal RNAs and formation of the 60S ribosome. In Kluyveromyces lactis (strain ATCC 8585 / CBS 2359 / DSM 70799 / NBRC 1267 / NRRL Y-1140 / WM37) (Yeast), this protein is Ribosome biogenesis protein YTM1.